We begin with the raw amino-acid sequence, 143 residues long: MSSFPILHLLLLLLGCQVPQAQGRPFSTDLPKQYFTMINEIMEMLNKSPSPSEEPLDSNEKETLLEDTLLRPNLDVFLNASSKFHKNGLLIWNNLKEFLPLLPTPTPRGEPISIMENNWGDFQRKLKKYLEALDNFLNFKNKP.

The N-terminal stretch at 1-23 (MSSFPILHLLLLLLGCQVPQAQG) is a signal peptide. N-linked (GlcNAc...) asparagine glycosylation is present at asparagine 79.

Belongs to the IL-3 family. In terms of assembly, monomer.

The protein resides in the secreted. Functionally, granulocyte/macrophage colony-stimulating factors are cytokines that act in hematopoiesis by controlling the production, differentiation, and function of 2 related white cell populations of the blood, the granulocytes and the monocytes-macrophages. This CSF induces granulocytes, macrophages, mast cells, stem cells, erythroid cells, eosinophils and megakaryocytes. The polypeptide is Interleukin-3 (IL3) (Canis lupus familiaris (Dog)).